A 303-amino-acid chain; its full sequence is D-alanine--D-alanine ligase (303 aa).

Residues 102–298 (RILLAAAGLP…YPELCDWMVR (197 aa)) form the ATP-grasp domain. 128 to 181 (PLPAPYVIKPVAEGSSVGVEIVRTGDNRRAEIARTWRFGKEALVESFIPGRELT) provides a ligand contact to ATP. Mg(2+)-binding residues include aspartate 251, glutamate 265, and asparagine 267.

The protein belongs to the D-alanine--D-alanine ligase family. It depends on Mg(2+) as a cofactor. Requires Mn(2+) as cofactor.

The protein localises to the cytoplasm. It catalyses the reaction 2 D-alanine + ATP = D-alanyl-D-alanine + ADP + phosphate + H(+). The protein operates within cell wall biogenesis; peptidoglycan biosynthesis. Its function is as follows. Cell wall formation. This is D-alanine--D-alanine ligase from Gluconobacter oxydans (strain 621H) (Gluconobacter suboxydans).